Consider the following 416-residue polypeptide: MIDLKLLEKDFENVSKRLKLKGVDENNLEEIKKLFKEKKEIKTTLDKLLEQRNILSKQIGNFMKNGEKDKAEEIKKEVNSLKEEISVLEEKLKTIEDSLLQKALVIPNIPDEDVPIGKDEDENVEIKRVGEIPTFDFEPKPHDELGEKLDWLDFTRGVKLAKSRFTVMKKDAARLERALINFFLDHNREWGFEEVYVPFMVNRETMTGTGQLPKFEEDLFKIENEELYLIPTAEVPLTNLFRDEIITNLDEPIKLTAYTPCFRKEAGSYGKDTKGIIRQHQFDKVELVAITKPEDSDKMFDEMVACASNALEKLGLPYRQLMLCTGDLGFSAAKTIDLEVWIPSQNKYREISSVSNTRDFQARRAKIRYKDGKKNKLVHTLNGSSLAVGRTLVAIMENYQTKDGNIQIPEALKKYL.

232-234 is a binding site for L-serine; sequence TAE. 263-265 lines the ATP pocket; the sequence is RKE. Glutamate 286 contacts L-serine. 350-353 serves as a coordination point for ATP; that stretch reads EISS. Serine 384 contacts L-serine.

Belongs to the class-II aminoacyl-tRNA synthetase family. Type-1 seryl-tRNA synthetase subfamily. Homodimer. The tRNA molecule binds across the dimer.

The protein resides in the cytoplasm. It carries out the reaction tRNA(Ser) + L-serine + ATP = L-seryl-tRNA(Ser) + AMP + diphosphate + H(+). The enzyme catalyses tRNA(Sec) + L-serine + ATP = L-seryl-tRNA(Sec) + AMP + diphosphate + H(+). The protein operates within aminoacyl-tRNA biosynthesis; selenocysteinyl-tRNA(Sec) biosynthesis; L-seryl-tRNA(Sec) from L-serine and tRNA(Sec): step 1/1. Functionally, catalyzes the attachment of serine to tRNA(Ser). Is also able to aminoacylate tRNA(Sec) with serine, to form the misacylated tRNA L-seryl-tRNA(Sec), which will be further converted into selenocysteinyl-tRNA(Sec). This Nautilia profundicola (strain ATCC BAA-1463 / DSM 18972 / AmH) protein is Serine--tRNA ligase.